Consider the following 200-residue polypeptide: MLAFCRSSLKSKKYFIILLALAAIAGLGTHAAWSSNGLPRIDNKTLARLAQQHPVVVLFRHAERCDRSTNQCLSDKTGITVKGTQDARELGNAFSADIPDFDLYSSNTVRTIQSATWFSAGKKLTVDKRLLQCGNEIYSAIKDLQSKAPDKNIVIFTHNHCLTYIAKNKRDATFKPDYLDGLVMHVEKGKVYLDGEFVNH.

The N-terminal stretch at 1–25 (MLAFCRSSLKSKKYFIILLALAAIA) is a signal peptide.

Belongs to the phosphoglycerate mutase family. Ais subfamily.

Its subcellular location is the periplasm. It functions in the pathway bacterial outer membrane biogenesis; lipopolysaccharide metabolism. Its function is as follows. Catalyzes the dephosphorylation of heptose(II) of the outer membrane lipopolysaccharide core. This is Lipopolysaccharide core heptose(II)-phosphate phosphatase from Escherichia coli (strain SE11).